The chain runs to 271 residues: Protein CDV3 homolog (271 aa).

Over residues 37 to 47 (KREVVKPKKPE) the composition is skewed to basic and acidic residues. Disordered stretches follow at residues 37 to 151 (KREV…GHGP) and 186 to 271 (SQQA…DEAS). Positions 48–61 (VAAGGVAVVGENEN) are enriched in low complexity. Residues 73–82 (VEEEWKEFEE) are compositionally biased toward acidic residues. A compositionally biased stretch (polar residues) spans 95 to 114 (QLSTISSARSRTAQESSESQ). Ser134 bears the Phosphoserine mark. The segment covering 224 to 242 (RPEEQRKKKNEPAFEEVRH) has biased composition (basic and acidic residues).

The protein belongs to the CDV3 family.

The protein is Protein CDV3 homolog of Drosophila melanogaster (Fruit fly).